A 200-amino-acid chain; its full sequence is Nucleoside triphosphate pyrophosphatase (200 aa).

Catalysis depends on D79, which acts as the Proton acceptor.

Belongs to the Maf family. A divalent metal cation serves as cofactor.

It localises to the cytoplasm. The enzyme catalyses a ribonucleoside 5'-triphosphate + H2O = a ribonucleoside 5'-phosphate + diphosphate + H(+). It catalyses the reaction a 2'-deoxyribonucleoside 5'-triphosphate + H2O = a 2'-deoxyribonucleoside 5'-phosphate + diphosphate + H(+). Its function is as follows. Nucleoside triphosphate pyrophosphatase. May have a dual role in cell division arrest and in preventing the incorporation of modified nucleotides into cellular nucleic acids. In Legionella pneumophila (strain Corby), this protein is Nucleoside triphosphate pyrophosphatase.